The following is a 159-amino-acid chain: Eukaryotic translation initiation factor 5A-1 (159 aa).

Basic and acidic residues predominate over residues 1–12; sequence MSDEEHHFESKA. Residues 1–23 form a disordered region; the sequence is MSDEEHHFESKADAGASKTYPQQ. K52 is subject to Hypusine.

It belongs to the eIF-5A family. In terms of processing, lys-52 undergoes hypusination, a unique post-translational modification that consists in the addition of a butylamino group from spermidine to lysine side chain, leading to the formation of the unusual amino acid hypusine. eIF-5As are the only known proteins to undergo this modification, which is essential for their function.

In terms of biological role, translation factor that promotes translation elongation and termination, particularly upon ribosome stalling at specific amino acid sequence contexts. Binds between the exit (E) and peptidyl (P) site of the ribosome and promotes rescue of stalled ribosome: specifically required for efficient translation of polyproline-containing peptides as well as other motifs that stall the ribosome. Acts as a ribosome quality control (RQC) cofactor by joining the RQC complex to facilitate peptidyl transfer during CAT tailing step. The protein is Eukaryotic translation initiation factor 5A-1 (EIF-5A1) of Nicotiana plumbaginifolia (Leadwort-leaved tobacco).